A 701-amino-acid polypeptide reads, in one-letter code: Elongation factor G (701 aa).

The tr-type G domain maps to 8 to 290; that stretch reads SLYRNIGISA…AVVELLPAPT (283 aa). GTP contacts are provided by residues 17–24, 88–92, and 142–145; these read AHIDAGKT, DTPGH, and NKMD.

It belongs to the TRAFAC class translation factor GTPase superfamily. Classic translation factor GTPase family. EF-G/EF-2 subfamily.

It localises to the cytoplasm. Catalyzes the GTP-dependent ribosomal translocation step during translation elongation. During this step, the ribosome changes from the pre-translocational (PRE) to the post-translocational (POST) state as the newly formed A-site-bound peptidyl-tRNA and P-site-bound deacylated tRNA move to the P and E sites, respectively. Catalyzes the coordinated movement of the two tRNA molecules, the mRNA and conformational changes in the ribosome. This chain is Elongation factor G, found in Neisseria gonorrhoeae (strain ATCC 700825 / FA 1090).